A 968-amino-acid polypeptide reads, in one-letter code: RNA polymerase-associated protein RapA (968 aa).

The region spanning 164-334 (DVGRRHAPRV…FARLRLLDPN (171 aa)) is the Helicase ATP-binding domain. An ATP-binding site is contributed by 177 to 184 (DEVGLGKT). A DEAH box motif is present at residues 280–283 (DEAH). Residues 490 to 685 (RVEWLMGYLT…ALKAQLEQGR (196 aa)) form the Helicase C-terminal domain.

The protein belongs to the SNF2/RAD54 helicase family. RapA subfamily. In terms of assembly, interacts with the RNAP. Has a higher affinity for the core RNAP than for the holoenzyme. Its ATPase activity is stimulated by binding to RNAP.

Transcription regulator that activates transcription by stimulating RNA polymerase (RNAP) recycling in case of stress conditions such as supercoiled DNA or high salt concentrations. Probably acts by releasing the RNAP, when it is trapped or immobilized on tightly supercoiled DNA. Does not activate transcription on linear DNA. Probably not involved in DNA repair. The protein is RNA polymerase-associated protein RapA of Salmonella typhimurium (strain LT2 / SGSC1412 / ATCC 700720).